The primary structure comprises 331 residues: Reticulocalbin-1 (331 aa).

Residues 1-29 (MARGGRGRRLGLALGLLLALVLAPRVLRA) form the signal peptide. The N-linked (GlcNAc...) asparagine glycan is linked to Asn-53. Ser-55 is subject to Phosphoserine. Thr-76 bears the Phosphothreonine mark. EF-hand domains lie at 79 to 114 (ESKERLGKIVDRIDNDGDGFVTTEELKTWIKRVQKR), 115 to 150 (YIFDNVAKVWKDYDRDKDDKISWEEYKQATYGYYLG), 166 to 201 (KMLPRDERRFKAADLNGDLTATREEFTAFLHPEEFE), 203 to 238 (MKEIVVLETLEDIDKNGDGFVDQDEYIADMFSHEEN), 244 to 279 (WVLSEREQFNEFRDLNKDGKLDKDEIRHWILPQDYD), and 280 to 315 (HAQAEARHLVYESDKNKDEKLTKEEILENWNMFVGS). Ser-80 bears the Phosphoserine; by FAM20C mark. 28 residues coordinate Ca(2+): Asp-92, Asp-94, Asp-96, Glu-103, Asp-128, Asp-130, Asp-132, Lys-134, Glu-139, Asp-179, Asn-181, Asp-183, Thr-185, Glu-190, Asp-216, Asn-218, Asp-220, Glu-227, Asp-257, Asn-259, Asp-261, Lys-263, Glu-268, Asp-293, Asn-295, Asp-297, Lys-299, and Glu-304. A Prevents secretion from ER motif is present at residues 328–331 (HDEL).

It belongs to the CREC family. O-glycosylated. O-mannosylated by POMT1 and POMT2 and elongated by POMGNT1.

The protein resides in the endoplasmic reticulum lumen. In terms of biological role, may regulate calcium-dependent activities in the endoplasmic reticulum lumen or post-ER compartment. This chain is Reticulocalbin-1 (RCN1), found in Homo sapiens (Human).